We begin with the raw amino-acid sequence, 475 residues long: Bifunctional aspartate aminotransferase and glutamate/aspartate-prephenate aminotransferase (475 aa).

The transit peptide at Met-1–Met-55 directs the protein to the chloroplast. 3 residues coordinate L-aspartate: Gly-107, Trp-193, and Asn-243. At Lys-306 the chain carries N6-(pyridoxal phosphate)lysine. Arg-445 serves as a coordination point for L-aspartate.

It belongs to the class-I pyridoxal-phosphate-dependent aminotransferase family. Homodimer. It depends on pyridoxal 5'-phosphate as a cofactor.

The protein localises to the plastid. It localises to the chloroplast. It catalyses the reaction L-aspartate + 2-oxoglutarate = oxaloacetate + L-glutamate. The enzyme catalyses L-arogenate + oxaloacetate = prephenate + L-aspartate. It carries out the reaction L-arogenate + 2-oxoglutarate = prephenate + L-glutamate. It participates in amino-acid biosynthesis; L-phenylalanine biosynthesis; L-arogenate from prephenate (L-Asp route): step 1/1. Its pathway is amino-acid biosynthesis; L-phenylalanine biosynthesis; L-arogenate from prephenate (L-Glu route): step 1/1. Its function is as follows. Prokaryotic-type aspartate aminotransferase. Also has a prenate transaminase activity. Involved in the aromatic amino acids biosynthesis pathway via the arogenate route. Required for the transamination of prephenate into arogenate. Required for early development of the embryo. The chain is Bifunctional aspartate aminotransferase and glutamate/aspartate-prephenate aminotransferase (PAT) from Arabidopsis thaliana (Mouse-ear cress).